The following is a 177-amino-acid chain: Endoribonuclease YbeY (177 aa).

Residues His142, His146, and His152 each coordinate Zn(2+).

It belongs to the endoribonuclease YbeY family. It depends on Zn(2+) as a cofactor.

It localises to the cytoplasm. In terms of biological role, single strand-specific metallo-endoribonuclease involved in late-stage 70S ribosome quality control and in maturation of the 3' terminus of the 16S rRNA. In Synechococcus sp. (strain CC9311), this protein is Endoribonuclease YbeY.